The sequence spans 329 residues: uncharacterized protein (329 aa).

This is an uncharacterized protein from Bacillus subtilis (strain 168).